The chain runs to 321 residues: Ribose-phosphate pyrophosphokinase C (321 aa).

Mg(2+) contacts are provided by Asp132 and Asp147. The interval 214–229 is binding of phosphoribosylpyrophosphate; it reads SGKVAIIIGSIADTCE.

This sequence belongs to the ribose-phosphate pyrophosphokinase family. Mg(2+) serves as cofactor.

The protein localises to the cytoplasm. It catalyses the reaction D-ribose 5-phosphate + ATP = 5-phospho-alpha-D-ribose 1-diphosphate + AMP + H(+). It functions in the pathway metabolic intermediate biosynthesis; 5-phospho-alpha-D-ribose 1-diphosphate biosynthesis; 5-phospho-alpha-D-ribose 1-diphosphate from D-ribose 5-phosphate (route I): step 1/1. This is Ribose-phosphate pyrophosphokinase C (prsC) from Dictyostelium discoideum (Social amoeba).